Here is a 469-residue protein sequence, read N- to C-terminus: MTSQLHKKGEAWSARFSEPMSELVKRYTSSVFFDKRLALVDIAGSLAHANMLAAQKIISADDLAAIERGMAQIKGEIERGEFEWQLDLEDVHLNIEARLTALIGDAGKRLHTGRSRNDQVATDIRLWLRGEIDRIGGLLNDLRGALIDLAEQNADTIMPGFTHLQVAQPVTFGHHLLAYVEMFTRDAERMRDCRTRVNRLPLGAAALAGTSYPIDRHAVAKTLGFDGICANSLDAVSDRDFAIEFTAASALVMTHVSRFSEELVLWMSPRVGFIDIADRFCTGSSIMPQKKNPDVPELARGKTGRVNGHLMALLTLMKGQPLAYNKDNQEDKEPLFDTVDTVADTLRIFAEMVAGITVKPDAMRAAALQGFSTATDLADYLVKRGLPFRDAHEAVAHAVKICDDRGIDLADLTLDEMKQELPNVAHLIGDDVFGYLTLEGSVASRNHPGGTAPDQVRAAVKAARAALGK.

The protein belongs to the lyase 1 family. Argininosuccinate lyase subfamily.

The protein localises to the cytoplasm. It catalyses the reaction 2-(N(omega)-L-arginino)succinate = fumarate + L-arginine. The protein operates within amino-acid biosynthesis; L-arginine biosynthesis; L-arginine from L-ornithine and carbamoyl phosphate: step 3/3. This is Argininosuccinate lyase from Burkholderia cenocepacia (strain ATCC BAA-245 / DSM 16553 / LMG 16656 / NCTC 13227 / J2315 / CF5610) (Burkholderia cepacia (strain J2315)).